The sequence spans 501 residues: Na(+)/H(+) antiporter NhaB (501 aa).

11 consecutive transmembrane segments (helical) span residues 24–44 (VILL…PGVA), 46–66 (WLLI…YPLL), 90–110 (VLTN…IYFM), 145–165 (FLDA…FFSV), 206–226 (LLMH…VGEP), 239–259 (FAGF…AGLA), 302–319 (ALWI…GLAF), 351–371 (FQES…VAVI), 395–415 (MFFI…VATV), 450–470 (VATP…IAPL), and 478–498 (MVIM…YMVT).

It belongs to the NhaB Na(+)/H(+) (TC 2.A.34) antiporter family.

The protein localises to the cell inner membrane. The catalysed reaction is 2 Na(+)(in) + 3 H(+)(out) = 2 Na(+)(out) + 3 H(+)(in). Its function is as follows. Na(+)/H(+) antiporter that extrudes sodium in exchange for external protons. The sequence is that of Na(+)/H(+) antiporter NhaB from Marinobacter nauticus (strain ATCC 700491 / DSM 11845 / VT8) (Marinobacter aquaeolei).